We begin with the raw amino-acid sequence, 208 residues long: Pyridoxine/pyridoxamine 5'-phosphate oxidase (208 aa).

Residues 53-58, 68-69, Lys-75, and Gln-100 each bind FMN; these read RTVLLK and YS. Lys-58 is a binding site for substrate. Substrate contacts are provided by Tyr-118, Arg-122, and Ser-126. FMN is bound by residues 135–136 and Trp-180; that span reads QS. Residue 186–188 coordinates substrate; the sequence is RLH. Arg-190 lines the FMN pocket.

It belongs to the pyridoxamine 5'-phosphate oxidase family. Homodimer. The cofactor is FMN.

It carries out the reaction pyridoxamine 5'-phosphate + O2 + H2O = pyridoxal 5'-phosphate + H2O2 + NH4(+). The catalysed reaction is pyridoxine 5'-phosphate + O2 = pyridoxal 5'-phosphate + H2O2. The protein operates within cofactor metabolism; pyridoxal 5'-phosphate salvage; pyridoxal 5'-phosphate from pyridoxamine 5'-phosphate: step 1/1. It participates in cofactor metabolism; pyridoxal 5'-phosphate salvage; pyridoxal 5'-phosphate from pyridoxine 5'-phosphate: step 1/1. Its function is as follows. Catalyzes the oxidation of either pyridoxine 5'-phosphate (PNP) or pyridoxamine 5'-phosphate (PMP) into pyridoxal 5'-phosphate (PLP). This Xylella fastidiosa (strain Temecula1 / ATCC 700964) protein is Pyridoxine/pyridoxamine 5'-phosphate oxidase.